Here is a 184-residue protein sequence, read N- to C-terminus: Ribosome-recycling factor (184 aa).

Belongs to the RRF family.

The protein resides in the cytoplasm. Responsible for the release of ribosomes from messenger RNA at the termination of protein biosynthesis. May increase the efficiency of translation by recycling ribosomes from one round of translation to another. In Acholeplasma laidlawii (strain PG-8A), this protein is Ribosome-recycling factor.